The primary structure comprises 189 residues: Large ribosomal subunit protein uL5 (189 aa).

The protein belongs to the universal ribosomal protein uL5 family. As to quaternary structure, part of the 50S ribosomal subunit; part of the 5S rRNA/L5/L18/L25 subcomplex. Contacts the 5S rRNA and the P site tRNA. Forms a bridge to the 30S subunit in the 70S ribosome.

In terms of biological role, this is one of the proteins that bind and probably mediate the attachment of the 5S RNA into the large ribosomal subunit, where it forms part of the central protuberance. In the 70S ribosome it contacts protein S13 of the 30S subunit (bridge B1b), connecting the 2 subunits; this bridge is implicated in subunit movement. Contacts the P site tRNA; the 5S rRNA and some of its associated proteins might help stabilize positioning of ribosome-bound tRNAs. The chain is Large ribosomal subunit protein uL5 from Kineococcus radiotolerans (strain ATCC BAA-149 / DSM 14245 / SRS30216).